A 487-amino-acid chain; its full sequence is Melanopsin (487 aa).

Residues 1–37 (MNPPSGPRTQEPSCVATPASPSRWDGYRSSTSSLDQP) form a disordered region. Residues 1-67 (MNPPSGPRTQ…VDVPDHAHYT (67 aa)) lie on the Extracellular side of the membrane. A helical membrane pass occupies residues 68–88 (LGTVILLVGLTGILGNLMVIY). Residues 89–102 (TFCRSRGLRTPANM) are Cytoplasmic-facing. A helical membrane pass occupies residues 103–123 (FIINLAVSDFFMSFTQAPVFF). Residues 124–139 (ASSLHKRWLFGEAGCE) are Extracellular-facing. A disulfide bridge links Cys138 with Cys216. The helical transmembrane segment at 140–160 (FYAFCGALFGITSMITLMAIA) threads the bilayer. Over 161–183 (LDRYLVITHPLATIGVVSKRRAA) the chain is Cytoplasmic. Residues 184–204 (LVLLGVWLYALAWSLPPFFGW) traverse the membrane as a helical segment. The Extracellular portion of the chain corresponds to 205–233 (SAYVPEGLLTSCSWDYMSFTPSVRAYTML). Residues 234 to 254 (LFCFVFFLPLLVIVYCYIFIF) traverse the membrane as a helical segment. Residues 255–291 (RAIRETGQALQTFRACEGGGRSPRQRQRLQREWKMAK) lie on the Cytoplasmic side of the membrane. The helical transmembrane segment at 292-312 (IELLVILLFVLSWAPYSIVAL) threads the bilayer. At 313-327 (MAFAGYAHVLTPYMN) the chain is on the extracellular side. Residues 328–348 (SVPAVIAKASAIHNPIIYAIT) form a helical membrane-spanning segment. Lys335 carries the post-translational modification N6-(retinylidene)lysine. Residues 349-487 (HPKYRMAIAQ…LPLHPGWAFH (139 aa)) are Cytoplasmic-facing. The segment at 436–459 (CSQGLEDREAKAPVRPQGREAETP) is disordered. Over residues 440 to 457 (LEDREAKAPVRPQGREAE) the composition is skewed to basic and acidic residues.

The protein belongs to the G-protein coupled receptor 1 family. Opsin subfamily. As to expression, eye. Expression is restricted within the ganglion cell layer.

The protein localises to the cell membrane. The protein resides in the cell projection. Its subcellular location is the axon. It is found in the dendrite. It localises to the perikaryon. Its function is as follows. Photoreceptor that binds cis-retinaldehydes. Contributes to pupillar reflex, photoentrainment and other non-image forming responses to light. May be involved in the optokinetic visual tracking response. May be involved in the regulation of retinal hyaloid vessel growth and regression. The chain is Melanopsin (OPN4) from Felis catus (Cat).